The sequence spans 861 residues: Bifunctional uridylyltransferase/uridylyl-removing enzyme (861 aa).

The segment at 1–321 (MKNDNRIIKN…VYHQKQKIIR (321 aa)) is uridylyltransferase. The interval 322-678 (LDDEFQLSNR…IMPHHSQGGT (357 aa)) is uridylyl-removing. One can recognise an HD domain in the interval 440-562 (VDQHTLFVIR…LPHARYLDYL (123 aa)). ACT domains lie at 679 to 760 (EVFI…AVSR) and 788 to 861 (QLFL…KSKY).

This sequence belongs to the GlnD family. It depends on Mg(2+) as a cofactor.

It catalyses the reaction [protein-PII]-L-tyrosine + UTP = [protein-PII]-uridylyl-L-tyrosine + diphosphate. It carries out the reaction [protein-PII]-uridylyl-L-tyrosine + H2O = [protein-PII]-L-tyrosine + UMP + H(+). Its activity is regulated as follows. Uridylyltransferase (UTase) activity is inhibited by glutamine, while glutamine activates uridylyl-removing (UR) activity. Functionally, modifies, by uridylylation and deuridylylation, the PII regulatory proteins (GlnB and homologs), in response to the nitrogen status of the cell that GlnD senses through the glutamine level. Under low glutamine levels, catalyzes the conversion of the PII proteins and UTP to PII-UMP and PPi, while under higher glutamine levels, GlnD hydrolyzes PII-UMP to PII and UMP (deuridylylation). Thus, controls uridylylation state and activity of the PII proteins, and plays an important role in the regulation of nitrogen assimilation and metabolism. This is Bifunctional uridylyltransferase/uridylyl-removing enzyme from Legionella pneumophila subsp. pneumophila (strain Philadelphia 1 / ATCC 33152 / DSM 7513).